We begin with the raw amino-acid sequence, 471 residues long: FAD-dependent monooxygenase andE (471 aa).

FAD contacts are provided by E35, G49, and R108. Y216 is a catalytic residue. D308 and A321 together coordinate FAD. The next 2 helical transmembrane spans lie at L403–P423 and T443–L463.

This sequence belongs to the paxM FAD-dependent monooxygenase family. It depends on FAD as a cofactor.

The protein resides in the membrane. The protein operates within secondary metabolite biosynthesis; terpenoid biosynthesis. Its function is as follows. FAD-dependent monooxygenase; part of the gene cluster that mediates the biosynthesis of anditomin, a fungal meroterpenoid. The first step of the pathway is the synthesis of 3,5-dimethylorsellinic acid (DMOA) by the polyketide synthase andM. DMOA is then converted to the phthalide compound 5,7-dihydroxy-4,6-dimethylphthalide (DHDMP) by the cytochrome P450 monooxygenase andK, which is further prenylated by the prenyltransferase andD to yield farnesyl-DHDMP. Further epoxidation by the FAD-dependent monooxygenase andE leads to epoxyfarnesyl-DHDMP. The next step involves the terpene cyclase andB that converts epoxyfarnesyl-DHDMP into preandiloid A through opening of the epoxide ring followed by the cyclization of the farnesyl moiety. Preandiloid A is in turn oxidized at the C-3 hydroxyl group to yield preandiloid B by the dehydrogenase andC. The dioxygenase andA is solely responsible for the dehydrogenation of preandiloid B leading to the enone preandiloid C, as well as for the intriguing structural rearrangement to generate the bicyclo[2.2.2]octane core, transforming preandiloid C into andiconin. FAD-binding monooxygenase andJ then produces andilesin D which is reduced by dehydrogenase andI to yield andilesin A. Action of acetyltransferase andG followed by a spontaneous acetate elimination leads then to andilesin B, which is in turn substrate of the short chain dehydrogenase andH to yield andilesin C. Finally, the dioxygenase andF catalyzes the transformation of andilesin C to anditomin. The chain is FAD-dependent monooxygenase andE from Emericella variicolor (Aspergillus stellatus).